We begin with the raw amino-acid sequence, 265 residues long: 3-methyl-2-oxobutanoate hydroxymethyltransferase (265 aa).

2 residues coordinate Mg(2+): aspartate 46 and aspartate 85. Residues aspartate 46–serine 47, aspartate 85, and lysine 114 contribute to the 3-methyl-2-oxobutanoate site. Glutamate 116 serves as a coordination point for Mg(2+). Glutamate 183 functions as the Proton acceptor in the catalytic mechanism.

Belongs to the PanB family. As to quaternary structure, homodecamer; pentamer of dimers. The cofactor is Mg(2+).

The protein resides in the cytoplasm. The catalysed reaction is 3-methyl-2-oxobutanoate + (6R)-5,10-methylene-5,6,7,8-tetrahydrofolate + H2O = 2-dehydropantoate + (6S)-5,6,7,8-tetrahydrofolate. It participates in cofactor biosynthesis; coenzyme A biosynthesis. Functionally, catalyzes the reversible reaction in which hydroxymethyl group from 5,10-methylenetetrahydrofolate is transferred onto alpha-ketoisovalerate to form ketopantoate. This chain is 3-methyl-2-oxobutanoate hydroxymethyltransferase, found in Pyrobaculum calidifontis (strain DSM 21063 / JCM 11548 / VA1).